The primary structure comprises 370 residues: DNA repair protein RAD51 homolog 2 (370 aa).

Position 109–116 (109–116 (GPPGIGKS)) interacts with ATP.

The protein belongs to the RecA family. RAD51 subfamily. Preferentially expressed in flower buds and roots.

The protein resides in the nucleus. May be involved in the homologous recombination repair (HRR) pathway of double-stranded DNA breaks arising during DNA replication or induced by DNA-damaging agents. This chain is DNA repair protein RAD51 homolog 2 (RAD51B), found in Arabidopsis thaliana (Mouse-ear cress).